A 570-amino-acid polypeptide reads, in one-letter code: Methyl-coenzyme M reductase subunit alpha (570 aa).

Gln161 provides a ligand contact to coenzyme F430. Coenzyme B contacts are provided by residues Arg239, 270–271, and Arg284; that span reads KH. His271 is subject to Pros-methylhistidine. Residue Arg285 is modified to 5-methylarginine. Residues Tyr346 and Phe464 each coordinate coenzyme M. Gly465 bears the 1-thioglycine mark. Position 470 is a (Z)-2,3-didehydroaspartate (Asp470). Cys472 bears the S-methylcysteine mark.

It belongs to the methyl-coenzyme M reductase alpha subunit family. As to quaternary structure, MCR is a hexamer of two alpha, two beta, and two gamma chains, forming a dimer of heterotrimers. It depends on coenzyme F430 as a cofactor. In terms of processing, the alpha subunit contains five modified amino acids near the active site region. Is methylated on His-271, Arg-285 and Cys-472, probably by the action of specific S-adenosylmethionine-dependent methyltransferases. Also contains a thioglycine at position 465, forming a thiopeptide bond. Contains a didehydroaspartate residue at position 470. The methylation on C5 of Arg-285 is a post-translational methylation not essential in vivo, but which plays a role for the stability and structural integrity of MCR. Does not show a methylation at Gln-420, as shown for M.marburgensis.

The protein localises to the cytoplasm. It catalyses the reaction coenzyme B + methyl-coenzyme M = methane + coenzyme M-coenzyme B heterodisulfide. The protein operates within one-carbon metabolism; methyl-coenzyme M reduction; methane from methyl-coenzyme M: step 1/1. Its function is as follows. Component of the methyl-coenzyme M reductase (MCR) I that catalyzes the reductive cleavage of methyl-coenzyme M (CoM-S-CH3 or 2-(methylthio)ethanesulfonate) using coenzyme B (CoB or 7-mercaptoheptanoylthreonine phosphate) as reductant which results in the production of methane and the mixed heterodisulfide of CoB and CoM (CoM-S-S-CoB). This is the final step in methanogenesis. This chain is Methyl-coenzyme M reductase subunit alpha (mcrA), found in Methanosarcina barkeri (strain Fusaro / DSM 804).